An 83-amino-acid polypeptide reads, in one-letter code: Putative beta-neurotoxin RjAa10f (83 aa).

The N-terminal stretch at 1 to 18 is a signal peptide; sequence MKILIFIIASFMLIGVWC. An LCN-type CS-alpha/beta domain is found at 19 to 82; it reads KEGYPMGRDG…VWDPNNNKCV (64 aa). 4 disulfides stabilise this stretch: cysteine 29–cysteine 81, cysteine 33–cysteine 55, cysteine 40–cysteine 62, and cysteine 44–cysteine 64.

The protein belongs to the long (4 C-C) scorpion toxin superfamily. Sodium channel inhibitor family. Beta subfamily. Expressed by the venom gland.

It localises to the secreted. Beta toxins bind voltage-independently at site-4 of sodium channels (Nav) and shift the voltage of activation toward more negative potentials thereby affecting sodium channel activation and promoting spontaneous and repetitive firing. This chain is Putative beta-neurotoxin RjAa10f, found in Rhopalurus junceus (Caribbean blue scorpion).